A 407-amino-acid polypeptide reads, in one-letter code: Na(+)-translocating NADH-quinone reductase subunit F (407 aa).

The helical transmembrane segment at 3 to 23 (IILGVVMFTLIVLALVLVILF) threads the bilayer. The 2Fe-2S ferredoxin-type domain maps to 32–126 (GDITISVNGD…DMDIELPEEI (95 aa)). Residues cysteine 69, cysteine 75, cysteine 78, and cysteine 110 each contribute to the [2Fe-2S] cluster site. Positions 129 to 269 (VKKWECTVIS…SGPFGEFFAK (141 aa)) constitute an FAD-binding FR-type domain. The tract at residues 272–389 (DAEMVFIGGG…PMMNAAVIGM (118 aa)) is catalytic.

Belongs to the NqrF family. Composed of six subunits; NqrA, NqrB, NqrC, NqrD, NqrE and NqrF. The cofactor is [2Fe-2S] cluster. It depends on FAD as a cofactor.

Its subcellular location is the cell inner membrane. The enzyme catalyses a ubiquinone + n Na(+)(in) + NADH + H(+) = a ubiquinol + n Na(+)(out) + NAD(+). Its function is as follows. NQR complex catalyzes the reduction of ubiquinone-1 to ubiquinol by two successive reactions, coupled with the transport of Na(+) ions from the cytoplasm to the periplasm. The first step is catalyzed by NqrF, which accepts electrons from NADH and reduces ubiquinone-1 to ubisemiquinone by a one-electron transfer pathway. The polypeptide is Na(+)-translocating NADH-quinone reductase subunit F (Vibrio parahaemolyticus serotype O3:K6 (strain RIMD 2210633)).